The chain runs to 127 residues: Holo-[acyl-carrier-protein] synthase (127 aa).

Mg(2+)-binding residues include Asp9 and Glu58.

It belongs to the P-Pant transferase superfamily. AcpS family. The cofactor is Mg(2+).

It is found in the cytoplasm. It catalyses the reaction apo-[ACP] + CoA = holo-[ACP] + adenosine 3',5'-bisphosphate + H(+). Its function is as follows. Transfers the 4'-phosphopantetheine moiety from coenzyme A to a Ser of acyl-carrier-protein. This Shewanella sp. (strain MR-7) protein is Holo-[acyl-carrier-protein] synthase.